Reading from the N-terminus, the 551-residue chain is Chaperonin GroEL (551 aa).

Residues 30–33 (TLGP), Lys51, 87–91 (DGTTT), Gly415, 479–481 (NAA), and Asp495 each bind ATP.

This sequence belongs to the chaperonin (HSP60) family. In terms of assembly, forms a cylinder of 14 subunits composed of two heptameric rings stacked back-to-back. Interacts with the co-chaperonin GroES.

The protein resides in the cytoplasm. It carries out the reaction ATP + H2O + a folded polypeptide = ADP + phosphate + an unfolded polypeptide.. In terms of biological role, together with its co-chaperonin GroES, plays an essential role in assisting protein folding. The GroEL-GroES system forms a nano-cage that allows encapsulation of the non-native substrate proteins and provides a physical environment optimized to promote and accelerate protein folding. The chain is Chaperonin GroEL from Acidithiobacillus ferrooxidans (strain ATCC 23270 / DSM 14882 / CIP 104768 / NCIMB 8455) (Ferrobacillus ferrooxidans (strain ATCC 23270)).